Reading from the N-terminus, the 120-residue chain is Putative ferric transport system permease-like protein AfuB (120 aa).

The Cytoplasmic segment spans residues 1 to 38 (MESLPGQIDKSLDEASLSLRAGSLRTITHILLPLLRPA). One can recognise an ABC transmembrane type-1 domain in the interval 1–102 (MESLPGQIDK…VVMLAIIFIF (102 aa)). Residues 39-59 (ILSALIYSFVRAITTVSAIVF) traverse the membrane as a helical segment. Over 60–81 (LVTPDTRVATAYILNRVEDGEY) the chain is Periplasmic. Residues 82–102 (GVAIAYGSILIVVMLAIIFIF) traverse the membrane as a helical segment. Topologically, residues 103–120 (DWLIGESRTSRSKAKNQA) are cytoplasmic.

The protein belongs to the binding-protein-dependent transport system permease family. FbpB subfamily.

It is found in the cell inner membrane. Functionally, a severely truncated paralog of the AfuB uptake protein, homologous only to the last 20% of the intact protein in Actinobacillus. The protein is Putative ferric transport system permease-like protein AfuB (afuB) of Escherichia coli (strain K12).